We begin with the raw amino-acid sequence, 412 residues long: Mannose-6-phosphate isomerase (412 aa).

Residues Gln99, His101, Glu126, and His265 each coordinate Zn(2+). Arg284 is an active-site residue.

It belongs to the mannose-6-phosphate isomerase type 1 family. It depends on Zn(2+) as a cofactor.

The protein localises to the cytoplasm. It localises to the nucleus. It catalyses the reaction D-mannose 6-phosphate = D-fructose 6-phosphate. Its pathway is nucleotide-sugar biosynthesis; GDP-alpha-D-mannose biosynthesis; alpha-D-mannose 1-phosphate from D-fructose 6-phosphate: step 1/2. Its function is as follows. Involved in the synthesis of the GDP-mannose and dolichol-phosphate-mannose required for a number of critical mannosyl transfer reactions. The polypeptide is Mannose-6-phosphate isomerase (pmi40) (Schizosaccharomyces pombe (strain 972 / ATCC 24843) (Fission yeast)).